The chain runs to 156 residues: Small ribosomal subunit protein uS7 (156 aa).

The protein belongs to the universal ribosomal protein uS7 family. As to quaternary structure, part of the 30S ribosomal subunit. Contacts proteins S9 and S11.

Functionally, one of the primary rRNA binding proteins, it binds directly to 16S rRNA where it nucleates assembly of the head domain of the 30S subunit. Is located at the subunit interface close to the decoding center, probably blocks exit of the E-site tRNA. This Dictyoglomus turgidum (strain DSM 6724 / Z-1310) protein is Small ribosomal subunit protein uS7.